Here is a 142-residue protein sequence, read N- to C-terminus: Peptide methionine sulfoxide reductase MsrB (142 aa).

The MsrB domain maps to 2 to 125; sequence IKKNKEELND…NSAAIQFIPY (124 aa). The Nucleophile role is filled by Cys114.

Belongs to the MsrB Met sulfoxide reductase family.

It carries out the reaction L-methionyl-[protein] + [thioredoxin]-disulfide + H2O = L-methionyl-(R)-S-oxide-[protein] + [thioredoxin]-dithiol. The sequence is that of Peptide methionine sulfoxide reductase MsrB from Staphylococcus epidermidis (strain ATCC 35984 / DSM 28319 / BCRC 17069 / CCUG 31568 / BM 3577 / RP62A).